Consider the following 144-residue polypeptide: uncharacterized protein (144 aa).

Helical transmembrane passes span 27 to 47, 49 to 69, 83 to 103, and 106 to 126; these read VVCA…IPDI, LLPI…LLAL, IVLL…DATV, and ALDM…ILNV.

Its subcellular location is the membrane. This is an uncharacterized protein from Saccharomyces cerevisiae (strain ATCC 204508 / S288c) (Baker's yeast).